The primary structure comprises 450 residues: MEETVDDPPTSAVLLDHCHFSQVIFNSVEKFYIPGGDITCYYTLTQHFIPRRKDWIGIFRVGWKTTREYYTFMWVTLPVDLNSESAKQQEVQFKAYYLPKDDEYYQFCYVDQDGVVRGASIPFQFRPENEEDILVVTTQSEVEEIEQHNKELCKENRELKDSCVSLQKQNSDMQATLQKKQEELETLKSINKKLEQTMKEQKDCWEIELLQLKEQNQKMSSENEKMGVRVDQLQAQLSNQGREMEKLVQGVQDKTEQLEHLKEENGQLFLSLTEQREHQKKLEQTVEEMKQKETTAAKKQQELTDQNMDLSKRLSENMIIHDVLQREKEKMEKENDYLKRENNRLLSYMGLDCDSLSYQVPTSNQGGTRQDPGLVFGNPYSGIQESSAPSLLSIKKCPTCKSDFAADVFDHNLALEQHLQTLSLNCPICDKTFPAKEKQIFEDHVFCHTL.

Positions 133 to 136 match the CLIR motif; the sequence is ILVV. Residues 135 to 349 adopt a coiled-coil conformation; the sequence is VVTTQSEVEE…RENNRLLSYM (215 aa). The LIR-like motif lies at 203–206; that stretch reads DCWE. An interaction with LGALS8 region spans residues 371–381; the sequence is DPGLVFGNPYS. Residues 395 to 450 form an interaction with MYO6 region; the sequence is KKCPTCKSDFAADVFDHNLALEQHLQTLSLNCPICDKTFPAKEKQIFEDHVFCHTL. The UBZ1-type zinc-finger motif lies at 423-448; that stretch reads SLNCPICDKTFPAKEKQIFEDHVFCH. Zn(2+) is bound by residues C426, C429, H444, and H448.

It belongs to the CALCOCO family. Dimer. Part of a complex consisting of CALCOCO2, TAX1BP1 and MYO6. Interacts with GEMIN4. Interacts with ATG8 family members MAP1LC3A, MAP1LC3B, GABARAP, GABARAPL1 and GABARAPL2. Interacts with ATG8 family member MAP1LC3C. Interacts with LGALS8. Interacts with TOM1; the interaction is indirect and is mediated by MYO6, which acts as a bridge between TOM1 and CALCOCO2. Interacts with AZI2.

The protein localises to the cytoplasm. Its subcellular location is the perinuclear region. It localises to the cytoskeleton. It is found in the cytoplasmic vesicle. The protein resides in the autophagosome membrane. In terms of biological role, xenophagy-specific receptor required for autophagy-mediated intracellular bacteria degradation. Acts as an effector protein of galectin-sensed membrane damage that restricts the proliferation of infecting pathogens upon entry into the cytosol by targeting LGALS8-associated bacteria for autophagy. Initially orchestrates bacteria targeting to autophagosomes and subsequently ensures pathogen degradation by regulating pathogen-containing autophagosome maturation. Bacteria targeting to autophagosomes relies on its interaction with MAP1LC3A, MAP1LC3B and/or GABARAPL2, whereas regulation of pathogen-containing autophagosome maturation requires the interaction with MAP3LC3C. May play a role in ruffle formation and actin cytoskeleton organization and seems to negatively regulate constitutive secretion. In Bos taurus (Bovine), this protein is Calcium-binding and coiled-coil domain-containing protein 2.